We begin with the raw amino-acid sequence, 119 residues long: MPFDPSTLKYDAAGLIPAIAQDAATGEVLMMAWMNAQAVARTLESGRVTYWSRSRQSFWVKGESSGHVQELVDFRVDCDRDCLLVTVRQTGPACHTNRRSCFYTAVREGEEVELMAPLL.

Aspartate 77 provides a ligand contact to Mg(2+). Cysteine 78 provides a ligand contact to Zn(2+). Mg(2+)-binding residues include aspartate 79 and aspartate 81. Residues cysteine 94 and cysteine 101 each contribute to the Zn(2+) site.

This sequence belongs to the PRA-CH family. In terms of assembly, homodimer. It depends on Mg(2+) as a cofactor. The cofactor is Zn(2+).

The protein localises to the cytoplasm. It carries out the reaction 1-(5-phospho-beta-D-ribosyl)-5'-AMP + H2O = 1-(5-phospho-beta-D-ribosyl)-5-[(5-phospho-beta-D-ribosylamino)methylideneamino]imidazole-4-carboxamide. The protein operates within amino-acid biosynthesis; L-histidine biosynthesis; L-histidine from 5-phospho-alpha-D-ribose 1-diphosphate: step 3/9. Its function is as follows. Catalyzes the hydrolysis of the adenine ring of phosphoribosyl-AMP. In Ruegeria pomeroyi (strain ATCC 700808 / DSM 15171 / DSS-3) (Silicibacter pomeroyi), this protein is Phosphoribosyl-AMP cyclohydrolase.